Consider the following 269-residue polypeptide: Undecaprenyl-diphosphatase (269 aa).

7 helical membrane passes run 42–62 (WDTF…ALYF), 83–103 (LTVL…HGVI), 110–130 (PYLP…LLVV), 142–162 (GMAL…LSLL), 186–206 (AEFS…LDLL), 219–239 (AIAI…KFLI), and 247–267 (FTPF…LIYI).

Belongs to the UppP family.

The protein resides in the cell inner membrane. The catalysed reaction is di-trans,octa-cis-undecaprenyl diphosphate + H2O = di-trans,octa-cis-undecaprenyl phosphate + phosphate + H(+). In terms of biological role, catalyzes the dephosphorylation of undecaprenyl diphosphate (UPP). Confers resistance to bacitracin. The chain is Undecaprenyl-diphosphatase from Caulobacter sp. (strain K31).